Reading from the N-terminus, the 283-residue chain is ESX-1 secretion-associated protein EspG1 (283 aa).

The protein belongs to the EspG family. In terms of assembly, interacts specifically with ESX-1-dependent PE/PPE proteins. Interacts with PPE68.

The protein localises to the cytoplasm. Its function is as follows. Specific chaperone for cognate PE/PPE proteins. Plays an important role in preventing aggregation of PE/PPE dimers. The chain is ESX-1 secretion-associated protein EspG1 from Mycobacterium tuberculosis (strain ATCC 25618 / H37Rv).